A 918-amino-acid chain; its full sequence is MKVSWPGENHWQVGPAVVESPAVGAPQVGGLPDVVPEGTLLNMVLKRMHRPRCCSYQLVFEHRRPSCIQGLRWTPLTNSEDSLDFRVSLEQATTEHVHKAGKLLHRHLLATYPTLIRDRKYHLRLYRHCCSGRELVDGILALGLGVHSRSQAVGICQVLLDEGALCHVKHDWTFQDRDAQFYRFPGPEPEPTGTQDVEEELVEAMALLSQRGPDALLTVALRKPPGQRTDEELDLIFEELLHIKAVAHLSNSVKRELAAVLLFEPHSKAGTVLFSQGDKGTSWYIIWKGSVNVVTHGKGLVTTLHEGDDFGQLALVNDAPRAATIILRENNCHFLRVDKQDFNRIIKDVEAKTMRLEEHGKVVLVLERTSQGAGPSRPPTPGRNRYTVMSGTPEKILELLLEAMRPDSSAHDPTETFLSDFLLTHSVFMPSTQLFTALLHHFHVEPADPAGGSEQEHSTYICNKRQQILRLVGRWVALYSPMLHSDPVATSFLQKLSDLVSRDARLSNLLREQYPERRRHHRLENGCGNVSPQTKARNAPVWLPNQEEPLPSSAGAIRVGDKVPYDICRPDHSVLTLHLPVTASVREVMAALAHEDHWTKGQVLVKVNSAGDVVGLQPDARGVATSLGLNERLFVVDPQEVHELTPHPEQLGPTLGSSEMLDLVSAKDLAGQLTDHDWNLFNRIHQVQEHLRDVTTANLERFMRRFNELQYWVATELCLCPVPGSRAQLLRKFIKLAAHLKEQKNLNSFFAVMFGLSNSAISRLAHTWERLPHKVRKLYSALERLLDPSWNHRVYRLALTKLSPPVIPFMPLLLKDVTFIHEGNHTLVENLINFEKMRMMARAVRMLHHCRSHSTAPLSPLRSRVSHIHEDSQGSRISTCSEQSLSTRSPASTWAYVQQLKVIDNQRELSRLSRELEP.

Position 79 is a phosphoserine (S79). The DEP domain occupies 110-186; that stretch reads ATYPTLIRDR…RDAQFYRFPG (77 aa). Residues 218–242 form an interaction with PDE3B region; it reads TVALRKPPGQRTDEELDLIFEELLH. 3',5'-cyclic AMP-binding positions include 311 to 314 and 321 to 322; these read GQLA and RA. The disordered stretch occupies residues 369–388; the sequence is TSQGAGPSRPPTPGRNRYTV. An N-terminal Ras-GEF domain is found at 384–521; the sequence is NRYTVMSGTP…EQYPERRRHH (138 aa). The tract at residues 398–422 is interaction with PDE3B; it reads ELLLEAMRPDSSAHDPTETFLSDFL. 2 positions are modified to phosphoserine: S531 and S859. The Ras-GEF domain maps to 665 to 884; it reads SAKDLAGQLT…SRISTCSEQS (220 aa).

As to quaternary structure, interacts with PDE3B and PIK3R6; form a signaling complex that regulates phosphatidylinositol 3-kinase gamma in angiogenesis.

Its subcellular location is the cytoplasm. The protein resides in the membrane. Its function is as follows. Guanine nucleotide exchange factor (GEF) for RAP1A and RAP2A small GTPases that is activated by binding cAMP. Through simultaneous binding of PDE3B to RAPGEF3 and PIK3R6 is assembled in a signaling complex in which it activates the PI3K gamma complex and which is involved in angiogenesis. Plays a role in the modulation of the cAMP-induced dynamic control of endothelial barrier function through a pathway that is independent on Rho-mediated signaling. Required for the actin rearrangement at cell-cell junctions, such as stress fibers and junctional actin. In Mus musculus (Mouse), this protein is Rap guanine nucleotide exchange factor 3 (Rapgef3).